A 303-amino-acid polypeptide reads, in one-letter code: Small ribosomal subunit protein uS2 (303 aa).

The disordered stretch occupies residues 267 to 303 (AESLSMAEEPAPPSQRKGPASETAEPVAEPAVTESGS).

This sequence belongs to the universal ribosomal protein uS2 family.

The protein is Small ribosomal subunit protein uS2 of Solibacter usitatus (strain Ellin6076).